The primary structure comprises 618 residues: Camphene synthase, chloroplastic (618 aa).

The transit peptide at 1–51 (MALLSITPLVSRSCLSSSHEIKALRRTIPTLGICRPGKSVAHSINMCLTSV) directs the protein to the chloroplast. Mg(2+) is bound by residues Asp-369, Asp-373, and Asp-521. The short motif at 369–373 (DDMYD) is the DDXXD motif element.

The protein belongs to the terpene synthase family. Tpsd subfamily. Requires Mg(2+) as cofactor. Mn(2+) serves as cofactor. The cofactor is K(+).

The protein localises to the plastid. It localises to the chloroplast. The enzyme catalyses (2E)-geranyl diphosphate = (1S,4R)-camphene + diphosphate. It participates in terpene metabolism; oleoresin biosynthesis. Functionally, involved in defensive oleoresin formation in conifers in response to insect attack or other injury. Involved in monoterpene (C10) olefins biosynthesis. The chain is Camphene synthase, chloroplastic (ag6) from Abies grandis (Grand fir).